Here is a 559-residue protein sequence, read N- to C-terminus: Thrombospondin-related anonymous protein (559 aa).

The signal sequence occupies residues 1–25 (MNHLGNVKYLVIVFLIFFDLFLVNG). Topologically, residues 26-496 (RDVQNNIVDE…KKGESDNKYK (471 aa)) are extracellular. In terms of domain architecture, VWFA spans 48–234 (DLYLLMDCSG…NVIGPFMKAV (187 aa)). Isoglutamyl lysine isopeptide (Gln-Lys) (interchain with K-? in Factor 3(A)) cross-links involve residues Q77 and Q78. The N-linked (GlcNAc...) asparagine glycan is linked to N132. Residues 241–287 (TASCGVWDEWSPCSVTCGKGTRSRKREILHEGCTSEIQEQCEEERCP) form the TSP type-1 domain. Disulfide bonds link C244-C273, C253-C281, and C257-C286. A disordered region spans residues 280–496 (QCEEERCPPK…KKGESDNKYK (217 aa)). The segment covering 283-292 (EERCPPKWEP) has biased composition (basic and acidic residues). A Cell attachment site motif is present at residues 307–309 (RGD). A glycan (N-linked (GlcNAc...) asparagine) is linked at N310. Over residues 370 to 400 (KEVPSDVPKNPEDDREENFDIPKKPENKHDN) the composition is skewed to basic and acidic residues. Polar residues predominate over residues 431 to 440 (DPQSQDNNGN). Residues 444–459 (PNSEDRETRPHGRNNE) show a composition bias toward basic and acidic residues. N460 carries an N-linked (GlcNAc...) asparagine glycan. Residues 466–495 (KYNDTPKHPEREEHEKPDNNKKKGESDNKY) are compositionally biased toward basic and acidic residues. The chain crosses the membrane as a helical span at residues 497–515 (IAGGIAGGLALLACAGLAY). Topologically, residues 516-559 (KFVVPGAATPYAGEPAPFDETLGEEDKDLDEPEQFRLPEENEWN) are cytoplasmic. The tract at residues 523–559 (ATPYAGEPAPFDETLGEEDKDLDEPEQFRLPEENEWN) is disordered. Residues 536–547 (TLGEEDKDLDEP) are compositionally biased toward acidic residues. The segment covering 548–559 (EQFRLPEENEWN) has biased composition (basic and acidic residues).

The protein localises to the cell membrane. This chain is Thrombospondin-related anonymous protein (TRAP), found in Plasmodium falciparum.